A 156-amino-acid polypeptide reads, in one-letter code: Ribosomal RNA large subunit methyltransferase H (156 aa).

Residues leucine 73, glycine 104, and 123–128 each bind S-adenosyl-L-methionine; that span reads IGPLTL.

It belongs to the RNA methyltransferase RlmH family. Homodimer.

It localises to the cytoplasm. The enzyme catalyses pseudouridine(1915) in 23S rRNA + S-adenosyl-L-methionine = N(3)-methylpseudouridine(1915) in 23S rRNA + S-adenosyl-L-homocysteine + H(+). Specifically methylates the pseudouridine at position 1915 (m3Psi1915) in 23S rRNA. This chain is Ribosomal RNA large subunit methyltransferase H, found in Stenotrophomonas maltophilia (strain R551-3).